The following is an 800-amino-acid chain: Receptor-like protein 47 (800 aa).

The first 31 residues, 1–31 (MMHSSSVRRMITVKWSLCLIFCLTNSILVSA), serve as a signal peptide directing secretion. Over 32-759 (KHLCLPDQKD…QDEDKEEEDQ (728 aa)) the chain is Extracellular. Asn66 and Asn102 each carry an N-linked (GlcNAc...) asparagine glycan. LRR repeat units follow at residues 109-131 (QHLQKLVLGSNHLSGILPDSIGN), 133-156 (KRLKVLVLVNCNLFGKIPSSLGNL), 157-179 (SYLTHLDLSYNDFTSEGPDSMGN), 190-213 (LSSVTWIDLGDNQLKGMLPSNMSS), 214-238 (LSKLEAFDISGNSFSGTIPSSLFMI), 240-262 (SLILLHLGRNDFSGPFEIGNISS), 263-288 (PSNLQLLNIGRNNFNPDIVDLSIFSP), 294-311 (YLDVSGINLKISSTVSLP), 312-334 (SPIEYLGLLSCNISEFPKFLRNQ), 335-358 (TSLEYLDISANQIEGQVPEWLWSL), 360-383 (ELRYVNISHNSFNGFEGPADVIQG), 385-406 (RELLVLDISSNIFQDPFPLLPV), 407-430 (VSMNYLFSSNNRFSGEIPKTICEL), 431-453 (DNLRILVLSNNNFSGSIPRCFEN), 455-477 (HLYVLHLRNNNLSGIFPEEAISH), 479-500 (LQSFDVGHNLFSGELPKSLINC), 502-523 (DIEFLNVEDNRINDTFPSWLEL), 524-550 (LPNLQILVLRSNEFYGPIFSPGDSLSF), 551-574 (SRLRIFDISENRFTGVLPSDYFVG), 621-645 (FTIYKTIDVSGNRLEGDIPESIGLL), 646-669 (KEVIVLSMSNNAFTGHIPPSLSNL), 670-693 (SNLQSLDLSQNRLSGSIPGELGKL), and 695-718 (FLEWMNFSHNRLEGPIPETTQIQT). Asn155 carries an N-linked (GlcNAc...) asparagine glycan. Asn210 is a glycosylation site (N-linked (GlcNAc...) asparagine). Residue Asn259 is glycosylated (N-linked (GlcNAc...) asparagine). N-linked (GlcNAc...) asparagine glycosylation is found at Asn323 and Asn333. An N-linked (GlcNAc...) asparagine glycan is attached at Asn365. Asn442, Asn465, Asn499, and Asn514 each carry an N-linked (GlcNAc...) asparagine glycan. N-linked (GlcNAc...) asparagine glycosylation is present at Asn668. The N-linked (GlcNAc...) asparagine glycan is linked to Asn700. Residues 760 to 780 (VFSWIAAAIGYVPGVVCGLTI) traverse the membrane as a helical segment. Topologically, residues 781–800 (GHILVSHKRDWFMRIVSFFT) are cytoplasmic.

This sequence belongs to the RLP family.

It is found in the cell membrane. In Arabidopsis thaliana (Mouse-ear cress), this protein is Receptor-like protein 47.